Consider the following 363-residue polypeptide: Cytochrome b (363 aa).

Helical transmembrane passes span 23 to 43 (VGFI…LLTF), 67 to 89 (WFVR…IHII), 102 to 122 (SWYS…TGYV), and 164 to 184 (FFIL…LHLY). Positions 73 and 87 each coordinate heme b. Residues histidine 168 and histidine 182 each contribute to the heme b site. Residue histidine 187 participates in a ubiquinone binding. 4 helical membrane passes run 210 to 230 (ILFS…PQVG), 271 to 291 (VFPT…LLII), 309 to 329 (RVWT…GCIG), and 332 to 352 (VINL…TTFV).

It belongs to the cytochrome b family. As to quaternary structure, the main subunits of complex b-c1 are: cytochrome b, cytochrome c1 and the Rieske protein. Heme b serves as cofactor.

Its subcellular location is the mitochondrion inner membrane. Functionally, component of the ubiquinol-cytochrome c reductase complex (complex III or cytochrome b-c1 complex) that is part of the mitochondrial respiratory chain. The b-c1 complex mediates electron transfer from ubiquinol to cytochrome c. Contributes to the generation of a proton gradient across the mitochondrial membrane that is then used for ATP synthesis. In Theileria parva (East coast fever infection agent), this protein is Cytochrome b (MT-CYB).